We begin with the raw amino-acid sequence, 309 residues long: Integral membrane protein sed5 (309 aa).

Residues 1-288 (MSFQDRTAEF…KFYERMSSNR (288 aa)) lie on the Cytoplasmic side of the membrane. Residues 37–66 (KHQKSEFTRIAQKIANQINQTGEKLQKLSQ) are a coiled coil. The region spanning 218–280 (DTYSQQRMSS…GSAQREIVKF (63 aa)) is the t-SNARE coiled-coil homology domain. The helical; Anchor for type IV membrane protein transmembrane segment at 289-308 (ALLFKIFGIVIIFFLLWVLV) threads the bilayer. Position 309 (T309) is a topological domain, vesicular.

This sequence belongs to the syntaxin family.

The protein localises to the membrane. It is found in the golgi apparatus membrane. Its function is as follows. Required for vesicular transport between the endoplasmic reticulum and the Golgi complex. Acts as a target organelle soluble NSF attachment protein receptor (t-SNARE). This chain is Integral membrane protein sed5 (sed5), found in Schizosaccharomyces pombe (strain 972 / ATCC 24843) (Fission yeast).